We begin with the raw amino-acid sequence, 264 residues long: Apolipoprotein A-I (264 aa).

The first 18 residues, 1–18 (MKAVVLTVAVLFLTGSQA), serve as a signal peptide directing secretion. Tandem repeats lie at residues 67-88 (LKLL…EQIG) and 89-110 (PVSQ…QEMN). A 10 X approximate tandem repeats region spans residues 67–264 (LKLLDNWDSL…DEATKKLNTQ (198 aa)). M109 is modified (methionine sulfoxide). One copy of the 3; half-length repeat lies at 111-121 (KDLEEVKRKVQ). Tandem repeats lie at residues 122–143 (PYLD…QQVE), 144–165 (PLSK…EKLS), and 166–187 (PLGQ…THLA). The 7; truncated repeat unit spans residues 188 to 207 (PYSDELRQRLAARLEALKEG). Copy 8 of the repeat occupies 208 to 229 (SSFAEYQAKATEHLSALGEKAK). The stretch at 230-240 (PALEDLRQGLL) is one 9; half-length repeat. The stretch at 241–264 (PVLESLKLSFWSAVDEATKKLNTQ) is repeat 10.

Belongs to the apolipoprotein A1/A4/E family. As to quaternary structure, homodimer. Interacts with APOA1BP and CLU. Component of a sperm activating protein complex (SPAP), consisting of APOA1, an immunoglobulin heavy chain, an immunoglobulin light chain and albumin. Interacts with NDRG1. Interacts with SCGB3A2. Interacts with NAXE and YJEFN3. Glycosylated. In terms of processing, palmitoylated. Post-translationally, phosphorylation sites are present in the extracellular medium.

It is found in the secreted. Participates in the reverse transport of cholesterol from tissues to the liver for excretion by promoting cholesterol efflux from tissues and by acting as a cofactor for the lecithin cholesterol acyltransferase (LCAT). As part of the SPAP complex, activates spermatozoa motility. This Ictidomys tridecemlineatus (Thirteen-lined ground squirrel) protein is Apolipoprotein A-I (APOA1).